A 57-amino-acid chain; its full sequence is Protein new-glue 4 (57 aa).

Residues 1–16 (MEWKLLLIVLPWLLVC) form the signal peptide.

The protein resides in the secreted. The protein is Protein new-glue 4 (ng4) of Drosophila melanogaster (Fruit fly).